A 285-amino-acid polypeptide reads, in one-letter code: NADPH-dependent 7-cyano-7-deazaguanine reductase (285 aa).

91–93 (IES) is a binding site for substrate. 93 to 94 (SK) is a binding site for NADPH. Cysteine 191 (thioimide intermediate) is an active-site residue. Aspartate 198 serves as the catalytic Proton donor. Position 230-231 (230-231 (HE)) interacts with substrate. 259 to 260 (RG) provides a ligand contact to NADPH.

This sequence belongs to the GTP cyclohydrolase I family. QueF type 2 subfamily. As to quaternary structure, homodimer.

The protein resides in the cytoplasm. It catalyses the reaction 7-aminomethyl-7-carbaguanine + 2 NADP(+) = 7-cyano-7-deazaguanine + 2 NADPH + 3 H(+). The protein operates within tRNA modification; tRNA-queuosine biosynthesis. Catalyzes the NADPH-dependent reduction of 7-cyano-7-deazaguanine (preQ0) to 7-aminomethyl-7-deazaguanine (preQ1). The protein is NADPH-dependent 7-cyano-7-deazaguanine reductase of Legionella pneumophila (strain Corby).